The sequence spans 88 residues: Small integral membrane protein 13 (88 aa).

The helical transmembrane segment at 10–30 (LVFVATLLIVLLLMVCGWYFV) threads the bilayer. Residues 48 to 61 (TGSQEGDNEQPSGS) are compositionally biased toward polar residues. Residues 48-88 (TGSQEGDNEQPSGSETEEDPSASPQKIRSARQRRPPVDAGH) form a disordered region. Phosphoserine occurs at positions 59 and 61. Thr63 is modified (phosphothreonine). Phosphoserine is present on Ser70.

It belongs to the SMIM13 family.

Its subcellular location is the membrane. The protein is Small integral membrane protein 13 (Smim13) of Mus musculus (Mouse).